The following is a 147-amino-acid chain: MKALIILGLLCLSVAVQGKVFERCELARTLKELGLDGYKGVSLANWLCLTKWESSYNTKATNYNPGSESTDYGIFQINSKWWCNDGKTPNAVDGCHVSCSELMENNIAKAVACAKHIVSEQGITAWVAWKSHCRDHDVSSYVEGCSL.

Residues 1–18 (MKALIILGLLCLSVAVQG) form the signal peptide. The C-type lysozyme domain maps to 19-147 (KVFERCELAR…VSSYVEGCSL (129 aa)). 4 disulfides stabilise this stretch: C24–C145, C48–C133, C83–C99, and C95–C113. Residues E53 and D71 contribute to the active site.

This sequence belongs to the glycosyl hydrolase 22 family. As to quaternary structure, monomer. As to expression, expressed in stomach.

Its subcellular location is the secreted. The enzyme catalyses Hydrolysis of (1-&gt;4)-beta-linkages between N-acetylmuramic acid and N-acetyl-D-glucosamine residues in a peptidoglycan and between N-acetyl-D-glucosamine residues in chitodextrins.. Functionally, lysozymes have primarily a bacteriolytic function; those in tissues and body fluids are associated with the monocyte-macrophage system and enhance the activity of immunoagents. The chain is Lysozyme C-1 from Ovis aries (Sheep).